Reading from the N-terminus, the 448-residue chain is Chromosomal replication initiator protein DnaA (448 aa).

The domain I, interacts with DnaA modulators stretch occupies residues 1–72 (MPDLQELWNY…VEGAYEFAEI (72 aa)). A domain II region spans residues 72–110 (IELTPIFVLPGESDNLTPLEPEEEHVLTKAETPTFLRET). The segment at 111–327 (HLNSKYTFDT…GALVRVQAYA (217 aa)) is domain III, AAA+ region. Gly155, Gly157, Lys158, and Thr159 together coordinate ATP. The interval 328–448 (TMQNAEITTS…ILDLKNTMKS (121 aa)) is domain IV, binds dsDNA.

Belongs to the DnaA family. In terms of assembly, oligomerizes as a right-handed, spiral filament on DNA at oriC.

Its subcellular location is the cytoplasm. Functionally, plays an essential role in the initiation and regulation of chromosomal replication. ATP-DnaA binds to the origin of replication (oriC) to initiate formation of the DNA replication initiation complex once per cell cycle. Binds the DnaA box (a 9 base pair repeat at the origin) and separates the double-stranded (ds)DNA. Forms a right-handed helical filament on oriC DNA; dsDNA binds to the exterior of the filament while single-stranded (ss)DNA is stabiized in the filament's interior. The ATP-DnaA-oriC complex binds and stabilizes one strand of the AT-rich DNA unwinding element (DUE), permitting loading of DNA polymerase. After initiation quickly degrades to an ADP-DnaA complex that is not apt for DNA replication. Binds acidic phospholipids. The sequence is that of Chromosomal replication initiator protein DnaA from Latilactobacillus sakei subsp. sakei (strain 23K) (Lactobacillus sakei subsp. sakei).